Consider the following 291-residue polypeptide: 4-hydroxy-tetrahydrodipicolinate synthase (291 aa).

Pyruvate is bound at residue threonine 44. Tyrosine 132 (proton donor/acceptor) is an active-site residue. Lysine 160 (schiff-base intermediate with substrate) is an active-site residue. Isoleucine 202 lines the pyruvate pocket.

It belongs to the DapA family. As to quaternary structure, homotetramer; dimer of dimers.

It localises to the cytoplasm. The catalysed reaction is L-aspartate 4-semialdehyde + pyruvate = (2S,4S)-4-hydroxy-2,3,4,5-tetrahydrodipicolinate + H2O + H(+). It participates in amino-acid biosynthesis; L-lysine biosynthesis via DAP pathway; (S)-tetrahydrodipicolinate from L-aspartate: step 3/4. Functionally, catalyzes the condensation of (S)-aspartate-beta-semialdehyde [(S)-ASA] and pyruvate to 4-hydroxy-tetrahydrodipicolinate (HTPA). The chain is 4-hydroxy-tetrahydrodipicolinate synthase from Syntrophus aciditrophicus (strain SB).